We begin with the raw amino-acid sequence, 445 residues long: ATP-dependent protease ATPase subunit HslU (445 aa).

ATP-binding positions include I18, 60 to 65 (GVGKTE), D258, E323, and R395.

Belongs to the ClpX chaperone family. HslU subfamily. In terms of assembly, a double ring-shaped homohexamer of HslV is capped on each side by a ring-shaped HslU homohexamer. The assembly of the HslU/HslV complex is dependent on binding of ATP.

The protein localises to the cytoplasm. In terms of biological role, ATPase subunit of a proteasome-like degradation complex; this subunit has chaperone activity. The binding of ATP and its subsequent hydrolysis by HslU are essential for unfolding of protein substrates subsequently hydrolyzed by HslV. HslU recognizes the N-terminal part of its protein substrates and unfolds these before they are guided to HslV for hydrolysis. This chain is ATP-dependent protease ATPase subunit HslU, found in Syntrophotalea carbinolica (strain DSM 2380 / NBRC 103641 / GraBd1) (Pelobacter carbinolicus).